Reading from the N-terminus, the 389-residue chain is D(-)-tartrate dehydratase (389 aa).

Residues Asn21, Asn55, Lys102, Tyr156, Lys182, 182 to 184 (KMK), 213 to 215 (DAN), Glu239, Glu265, His322, and 341 to 343 (ESY) contribute to the substrate site. Lys184 (acceptor) is an active-site residue. Positions 213, 239, and 265 each coordinate Mg(2+). The active-site Proton donor/acceptor is His322.

The protein belongs to the mandelate racemase/muconate lactonizing enzyme family. In terms of assembly, homooctamer; tetramer of dimers. It depends on Mg(2+) as a cofactor.

It catalyses the reaction (S,S)-tartrate = oxaloacetate + H2O. Catalyzes the dehydration of D-tartrate to oxaloacetate. This is D(-)-tartrate dehydratase (tarD) from Bradyrhizobium diazoefficiens (strain JCM 10833 / BCRC 13528 / IAM 13628 / NBRC 14792 / USDA 110).